Here is a 501-residue protein sequence, read N- to C-terminus: TNF receptor-associated factor 2 (501 aa).

An N-acetylalanine modification is found at Ala2. Phosphoserine is present on Ser5. Position 7 is a phosphothreonine (Thr7). Ser11 is modified (phosphoserine). Residue Thr22 is modified to Phosphothreonine. A Glycyl lysine isopeptide (Lys-Gly) (interchain with G-Cter in ubiquitin) cross-link involves residue Lys31. Residues Cys34–Val73 form an RING-type zinc finger. Position 117 is a phosphothreonine; by PKC (Thr117). TRAF-type zinc fingers lie at residues Cys124–Glu180 and Val177–Gln233. The interval Glu283 to Val293 is important for interaction with BIRC2 and BIRC3. A coiled-coil region spans residues Val298–Ser348. Lys320 participates in a covalent cross-link: Glycyl lysine isopeptide (Lys-Gly) (interchain with G-Cter in ubiquitin). The MATH domain maps to Asp351–Val496.

Belongs to the TNF receptor-associated factor family. A subfamily. Homotrimer. Heterotrimer with TRAF1. Heterotrimer with TRAF3 (via TRAF domain). The domain containing the RING-type and the first TRAF-type zinc finger can also form homodimers (in vitro). Interacts with TNFRSF1B/TNFR2. Interacts with TNFRSF5/CD40. Interacts with TNFRSF4, TNFRSF7/CD27, TNFRSF8/CD30, TNFRSF9/CD137, TNFRSF11A/RANK, TNFRSF13B/TACI, TNFRSF14, TNFRSF16/NGFR, TNFRSF17/BCMA, TNFRSF18/AITR, TNFRSF19/TROY, TNFRSF19L/RELT and EDAR. Stimulation of TNF-alpha receptor TNFRSF1A leads to the formation of two distinct signaling complexes. Plasma membrane-bound complex I is composed of TNFRSF1A, TRADD, RIPK1, TRAF2 and BIRC2/c-IAP1 or BIRC3 which interacts with CHUCK/IKK-alpha, IKBKB/IKK-beta and IKBKG/IKK-gamma promoting cell survival. Subsequently, TRADD, RIPK1 and TRAF2 dissociate from TNFRSF1A and form cytoplasmic complex II with FADD and caspase CASP8 promoting cell apoptosis. Interacts with TRADD. Identified in a complex with TNFRSF1A, RIPK1 and IKBKB/IKK-beta. Interacts with RIPK2. Interacts with BIRC2 and BIRC3 N-terminus; a single BIRC2 or BIRC3 molecule interacts with a heterotrimer formed by TRAF1 and TRAF2, or a TRAF2 homotrimer. Identified in a complex composed of TRAF2, TRAF3, BIRC2 and BIRC3. Interacts with BIRC2; the interaction promotes BIRC2 stability. Interaction with BIRC2 and/or BIRC3 is essential for ubiquitination of IKBKE, degradation of NFKBIA and activation of NF-kappa-B. Within complex I, phosphorylated TRAF2 interacts (via 'Lys-63'-linked polyubiquitin chains) with CHUCK/IKK-alpha, IKBKB/IKK-beta, IKBKG/IKK-gamma TAB2, TAB3 and TAK1 in response to TNF-alpha stimulation. Within complex I, interacts with UXT isoform 1 (via TPQE motif); the interaction prevents the recruitment of FADD and CASP8/caspase 8 to complex I. Forms a complex composed of TNFRSF8/CD30 or TNFRSF1B/TNFR2, and TRAF1, TRAF2 and E3 ligase TRAIP. Within the complex, interacts with TRAIP; the interaction inhibits TRAF2-mediated NF-kappa B activation. Component of a complex composed of TANK and TBK1. Interacts with TRPC4AP. Interacts with MAP3K1/MEKK1, MAP3K5/ASK1 and MAP3K11/MLK3 in response to TNF-alpha stimulation; the interaction leads to JNK activation and interaction with MAP3K5 is inhibited by PRMT1. Component of a complex composed of MAP3K14/NIK BIRC3 and TRAF3; the interaction leads to BIRC2/3-mediated ubiquitination of TRAF3 upon CD40 engagement in a TRAF2-dependent manner. Interacts with MAP3K14/NIK in response to TNF-alpha stimulation; the interaction leads to NF-kappa B activation. Interacts with PEG3; the interaction may promote TRAF2-mediated NF-kappa B activation. Interacts with HIVEP3; the interaction may inhibit TNF-alpha-TRAF2-mediated NF-kappa B and JNK activation. Interacts with TANK/ITRAF; the interaction prevents interaction between TNFRSF1B/TNFR2 and TRAF2. Interacts with deubiquitinating enzyme CYLD; the interaction results in the deubiquitination and inactivation of TRAF2. Interacts with SIAH2; the interaction leads to TRAF2 ubiquitination and degradation. Interacts with E2 conjugating enzyme UBE2N/Ubc13, E3 ligase ITCH and RNF11 in response to TNF-alpha stimulation. Interacts with ubiquitin-editing enzyme TNFAIP3/A20 in response to TNF-alpha stimulation; the interaction promotes TRAF2 dissociation from UBE2N/Ubc13, ITCH, RNF11 and TAX1BP1 and prevents prolonged TRAF-2 ubiquitination. Interacts with TAX1BP1 in response to TNF-alpha stimulation; the interaction promotes TRAF2 dissociation from UBE2N/Ubc13 and TNFAIP3/A20, and prevents prolonged TRAF-2 ubiquitination. Interacts (via C-terminus) with EIF2AK2/PKR (via the kinase catalytic domain). Interacts with deubiquitinating enzyme USP48. Interacts with PTPN2; probably involved in TNF-mediated signaling. Interacts with Toll-like receptor TLR4/3 adapter TICAM1/TRIF; the interaction may promote TICAM1 ubiquitination. Interacts with kinase/endoribonuclease ERN1/IRE1 and DAB2IP in response to ER stress; the interaction requires DAB2IP. Interacts with ERN1/IRE1 and TAOK3 in response to ER stress; the interaction may promote TRAF2 phosphorylation. Interacts (via zinc fingers) with DAB2IP (via C-terminus PER domain) in response to TNF-alpha stimulation. Interacts with CASP8AP2/FLASH. Interacts with NFATC2IP; the interaction may repress IL-4 production in T cells. Interacts with kinase CDK9. Interacts with sphingosine kinase 1 SPHK1. Interacts with kinase TNIK. Interacts with TRAFD1. Interacts with DNA phosphodiesterase TDP2. Interacts with MAVS/IPS1. Interacts with CARD14. Interacts with GPS2. Interacts with XPNPEP3. Interacts with RIPK3. Interacts with RELL2. Interacts with LRRC19. Interacts with GAPDH; promoting TRAF2 ubiquitination. Post-translationally, phosphorylated at several serine residues within the first 128 amino acid residues. Phosphorylated at Thr-117 in response to signaling via TNF and TNFRSF1A. Phosphorylation at Thr-117 is required for 'Lys-63'-linked polyubiquitination, but not for 'Lys-48'-linked polyubiquitination. Phosphorylation at Thr-117 is important for interaction with IKKA and IKKB, activation of IKK and subsequent activation of NF-kappa-B. Undergoes both 'Lys-48'-linked and 'Lys-63'-linked polyubiquitination. Polyubiquitinated via 'Lys-63'-linked ubiquitin in response to TNF signaling; this requires prior phosphorylation at Thr-117. 'Lys-63'-linked polyubiquitination promotes TRAF2-mediated activation of NF-kappa-B. Can be polyubiquitinated at several Lys residues via 'Lys-48'-linked ubiquitin chains in response to TNF signaling, leading to proteasomal degradation. Autoubiquitinated, leading to its subsequent proteasomal degradation. Polyubiquitinated by BIRC2 and SIAH2, leading to its subsequent proteasomal degradation. Not ubiquitinated by BIRC3 or SIAH1. Deubiquitinated by CYLD, a protease that specifically cleaves 'Lys-63'-linked polyubiquitin chains. Ubiquination is inhibited by LRRC19; inhiits proteasomal degradation. Ubiquitinated at Lys-320 by the SCF(FBXL2) complex, leading to its degradation by the proteasome. Ubiquitinated by E3 ubiquitin-protein ligase complex containing FBXO7; leading to repression of NF-kappa-B signaling. In terms of tissue distribution, isoform 1 and isoform 2 are expressed in spleen, adipose tissues, skeletal muscles, thymus, testis, heart, lung, brain. Isoform 2 is very weakly expressed in heart, lung and brain.

It is found in the cytoplasm. The enzyme catalyses S-ubiquitinyl-[E2 ubiquitin-conjugating enzyme]-L-cysteine + [acceptor protein]-L-lysine = [E2 ubiquitin-conjugating enzyme]-L-cysteine + N(6)-ubiquitinyl-[acceptor protein]-L-lysine.. It participates in protein modification; protein ubiquitination. With respect to regulation, has very low E3 ubiquitin ligase activity in the absence of sphingosine-1-phosphate. E3 ubiquitin ligase activity is strongly activated by cytoplasmic sphingosine-1-phosphate. Functionally, E3 ubiquitin-protein ligase that regulates activation of NF-kappa-B and JNK and plays a central role in the regulation of cell survival and apoptosis. Catalyzes 'Lys-63'-linked ubiquitination of target proteins, such as BIRC3, IKBKE, MLST8, RIPK1 and TICAM1. Is an essential constituent of several E3 ubiquitin-protein ligase complexes, where it promotes the ubiquitination of target proteins by bringing them into contact with other E3 ubiquitin ligases. Regulates BIRC2 and BIRC3 protein levels by inhibiting their autoubiquitination and subsequent degradation; this does not depend on the TRAF2 RING-type zinc finger domain. Plays a role in mediating activation of NF-kappa-B by EIF2AK2/PKR. In complex with BIRC2 or BIRC3, promotes ubiquitination of IKBKE. Acts as a regulator of mTORC1 and mTORC2 assembly by mediating 'Lys-63'-linked ubiquitination of MLST8, thereby inhibiting formation of the mTORC2 complex, while facilitating assembly of the mTORC1 complex. Required for normal antibody isotype switching from IgM to IgG. In Mus musculus (Mouse), this protein is TNF receptor-associated factor 2 (Traf2).